The sequence spans 475 residues: Eukaryotic translation initiation factor 3 subunit L (475 aa).

The 195-residue stretch at 257-451 (DAIRMFSHIL…DLDYAMQGDL (195 aa)) folds into the PCI domain.

This sequence belongs to the eIF-3 subunit L family. Component of the eukaryotic translation initiation factor 3 (eIF-3) complex.

Its subcellular location is the cytoplasm. Its function is as follows. Component of the eukaryotic translation initiation factor 3 (eIF-3) complex, which is involved in protein synthesis of a specialized repertoire of mRNAs and, together with other initiation factors, stimulates binding of mRNA and methionyl-tRNAi to the 40S ribosome. The eIF-3 complex specifically targets and initiates translation of a subset of mRNAs involved in cell proliferation. The sequence is that of Eukaryotic translation initiation factor 3 subunit L from Sclerotinia sclerotiorum (strain ATCC 18683 / 1980 / Ss-1) (White mold).